Here is a 209-residue protein sequence, read N- to C-terminus: Uracil phosphoribosyltransferase (209 aa).

5-phospho-alpha-D-ribose 1-diphosphate contacts are provided by residues Arg-79, Arg-104, and 131–139; that span reads DPMLATGGS. Uracil-binding positions include Ile-194 and 199–201; that span reads GDA. Asp-200 serves as a coordination point for 5-phospho-alpha-D-ribose 1-diphosphate.

Belongs to the UPRTase family. It depends on Mg(2+) as a cofactor.

The enzyme catalyses UMP + diphosphate = 5-phospho-alpha-D-ribose 1-diphosphate + uracil. It participates in pyrimidine metabolism; UMP biosynthesis via salvage pathway; UMP from uracil: step 1/1. With respect to regulation, allosterically activated by GTP. Catalyzes the conversion of uracil and 5-phospho-alpha-D-ribose 1-diphosphate (PRPP) to UMP and diphosphate. This chain is Uracil phosphoribosyltransferase, found in Listeria monocytogenes serovar 1/2a (strain ATCC BAA-679 / EGD-e).